The primary structure comprises 356 residues: MADAAVIEKLEAGFKKLEAATDCKSLLKKYLTKEVFDKLKDKKTSLGATLLDVIQSGVENLDSGVGIYAPDAEAYTLFAPLFDPIIEDYHVGFKQTDKHPNKDFGDVNSFVNVDPEGKFVISTRVRCGRSMQGYPFNPCLTESQYKEMEAKVSSTLSSLEGELKGTYYPLTGMSKEVQQKLIDDHFLFKEGDRFLQAANACRYWPAGRGIYHNDNKTFLVWVNEEDHLRIISMQMGGDLGQVFRRLTSAVNEIEKRIPFSHHDRLGFLTFCPTNLGTTVRASVHIKLPKLAANREKLEEVAGKYNLQVRGTRGEHTEAEGGIYDISNKRRMGLTEFQAVKEMQDGILELIKMEKEM.

The 83-residue stretch at 9 to 91 folds into the Phosphagen kinase N-terminal domain; it reads KLEAGFKKLE…FDPIIEDYHV (83 aa). 64 to 68 contacts L-arginine; sequence GVGIY. The region spanning 119-356 is the Phosphagen kinase C-terminal domain; that stretch reads FVISTRVRCG…LELIKMEKEM (238 aa). ATP-binding positions include 122–126 and His-185; that span reads STRVR. An L-arginine-binding site is contributed by Glu-225. Residue Arg-229 coordinates ATP. An L-arginine-binding site is contributed by Cys-271. ATP is bound by residues 280–284 and 309–314; these read RASVH and RGTRGE. Glu-314 provides a ligand contact to L-arginine.

It belongs to the ATP:guanido phosphotransferase family. In terms of tissue distribution, expressed in muscle (at protein level). Expressed in muscle, heart, nerve, stomach and hemocytes, with the highest expression in muscle. Very low expression in eyestalk and intestine. Not expressed in hepatopancreas, gill and skin.

It catalyses the reaction L-arginine + ATP = N(omega)-phospho-L-arginine + ADP + H(+). No change in activity after supplementation with 10 mM glucose. However, activity decreases significantly when glucose concentration is higher than 50 mM and almost all activity is lost with 200 mM glucose. Activity is significantly increased after treatment with 10 mM and 50 mM ATP. However, activity drops significantly with 200 mM ATP. Inhibited by 10-200 mM alpha-ketoglutarate. No change in activity after incubation with 10-200 mM L-citrulline, L-ornaline or glycerol. In terms of biological role, catalyzes the reversible transfer of high energy ATP gamma-phosphate group to L-arginine. In Penaeus vannamei (Whiteleg shrimp), this protein is Arginine kinase Lit v 2.